Reading from the N-terminus, the 335-residue chain is Protein BRASSINAZOLE-RESISTANT 2 (335 aa).

Residues Met-1–Ala-19 show a composition bias toward low complexity. Disordered stretches follow at residues Met-1–Arg-40, Thr-85–Pro-122, and Pro-164–Pro-190. Residues Arg-22 to Arg-103 form a required for DNA-binding region. Residues Gly-99–Asp-120 show a composition bias toward polar residues. Phosphothreonine is present on Thr-175. The tract at residues His-231–His-251 is PEST-like.

It belongs to the BZR/LAT61 family. In terms of assembly, interacts with ASK7/BIN2 through its C-terminal domain and with the bHLH transcription factors BIM1, BIM2 and BIM3 through its C- and N-terminal domains. Interacts (via N-terminus) with REF6 and ELF6. Interacts with MYB30. Interacts with IWS1. Interacts with ASHH2/SDG8. Binds to MYB56 when dephosphorylated in the nucleus of quiescent center (QC) cells. Binds to WRKY46, WRKY54 and WRKY70 to cooperatively regulate the expression of target genes. Phosphorylated by ASK7/BIN2. Phosphorylation increases protein degradation and/or interferes with the nuclear localization. In terms of tissue distribution, ubiquitously expressed in cotyledons, leaves, hypocotyls and roots.

The protein resides in the nucleus. The protein localises to the cytoplasm. Functionally, positive regulator of brassinosteroid (BR) signaling. Transcription factor that activates target gene expression by binding specifically to the DNA sequence 5'-CANNTG-3'(E box) through its N-terminal domain. Can bind individually to the promoter as a homodimer or synergistically as a heterodimer with BIM1, BIM2 or BIM3. The C-terminal domain is probably involved in transcriptional activation. Recruits the transcription elongation factor IWS1 to control BR-regulated gene expression. Forms a trimeric complex with IWS1 and ASHH2/SDG8 to regulate BR-regulated gene expression. Promotes quiescent center (QC) self-renewal by cell divisions in the primary root. Binds to the E-boxes of the BRAVO promoter to repress its expression. This Arabidopsis thaliana (Mouse-ear cress) protein is Protein BRASSINAZOLE-RESISTANT 2.